The primary structure comprises 254 residues: 3-oxo-5-alpha-steroid 4-dehydrogenase 2 (254 aa).

The next 4 membrane-spanning stretches (helical) occupy residues S8 to A28, P72 to F92, F146 to I166, and L206 to L226.

The protein belongs to the steroid 5-alpha reductase family.

Its subcellular location is the microsome membrane. It is found in the endoplasmic reticulum membrane. The catalysed reaction is a 3-oxo-5alpha-steroid + NADP(+) = a 3-oxo-Delta(4)-steroid + NADPH + H(+). It carries out the reaction 17beta-hydroxy-5alpha-androstan-3-one + NADP(+) = testosterone + NADPH + H(+). It catalyses the reaction 5alpha-pregnane-3,20-dione + NADP(+) = progesterone + NADPH + H(+). In terms of biological role, converts testosterone (T) into 5-alpha-dihydrotestosterone (DHT) and progesterone or corticosterone into their corresponding 5-alpha-3-oxosteroids. It plays a central role in sexual differentiation and androgen physiology. This chain is 3-oxo-5-alpha-steroid 4-dehydrogenase 2 (SRD5A2), found in Macaca fascicularis (Crab-eating macaque).